Consider the following 551-residue polypeptide: MNLWQQNYDPAGNIWLSSLIASLPILFFFFALIKLKLKGYVAASWTVAIALAVALLFYKMPVANALASVVYGFFYGLWPIAWIIIAAVFVYKISVKTGQFDIIRSSILSITPDQRLQMLIVGFCFGAFLEGAAGFGAPVAITAALLVGLGFKPLYAAGLCLIVNTAPVAFGAMGIPILVAGQVTGIDSFEIGQMVGRQLPFMTIIVLFWIMAIMDGWRGIKETWPAVVVAGGSFAIAQYLSSNFIGPELPDIISSLVSLLCLTLFLKRWQPVRVFRFGDLGASQVDMTLAHTGYTAGQVLRAWTPFLFLTATVTLWSIPPFKALFASGGALYEWVINIPVPYLDKLVARMPPVVSEATAYAAVFKFDWFSATGTAILFAALLSIVWLKMKPSDAISTFGSTLKELALPIYSIGMVLAFAFISNYSGLSSTLALALAHTGHAFTFFSPFLGWLGVFLTGSDTSSNALFAALQATAAQQIGVSDLLLVAANTTGGVTGKMISPQSIAIACAAVGLVGKESDLFRFTVKHSLIFTCIVGVITTLQAYVLTWMIP.

The next 13 helical transmembrane spans lie at 13-33, 37-57, 69-89, 131-151, 159-179, 194-214, 220-240, 244-264, 366-386, 405-425, 438-458, 494-514, and 530-550; these read NIWL…FALI, LKGY…ALLF, VVYG…AAVF, GAAG…GLGF, LCLI…PILV, MVGR…MAIM, IKET…AQYL, FIGP…CLTL, FDWF…SIVW, LALP…SNYS, TGHA…FLTG, VTGK…VGLV, and IFTC…TWMI.

The protein belongs to the lactate permease family.

The protein localises to the cell inner membrane. It carries out the reaction (S)-lactate(in) + H(+)(in) = (S)-lactate(out) + H(+)(out). It catalyses the reaction (R)-lactate(in) + H(+)(in) = (R)-lactate(out) + H(+)(out). The enzyme catalyses glycolate(in) + H(+)(in) = glycolate(out) + H(+)(out). With respect to regulation, inhibited by the proton ionophore carbonyl cyanide m-chlorophenylhydrazone (CCCP). In terms of biological role, uptake of L-lactate across the membrane. Can also transport D-lactate and glycolate. Seems to be driven by a proton motive force. This Escherichia coli (strain K12) protein is L-lactate permease.